The primary structure comprises 237 residues: Protein GrpE (237 aa).

Disordered regions lie at residues 1 to 52 and 200 to 237; these read MSGD…RLQQ and KVSM…QPGV. Over residues 27–40 the composition is skewed to polar residues; the sequence is ASINSDEGQSSAQS. Positions 204 to 218 are enriched in low complexity; sequence GPGPQSGASPSSAQP.

It belongs to the GrpE family. Homodimer.

It localises to the cytoplasm. In terms of biological role, participates actively in the response to hyperosmotic and heat shock by preventing the aggregation of stress-denatured proteins, in association with DnaK and GrpE. It is the nucleotide exchange factor for DnaK and may function as a thermosensor. Unfolded proteins bind initially to DnaJ; upon interaction with the DnaJ-bound protein, DnaK hydrolyzes its bound ATP, resulting in the formation of a stable complex. GrpE releases ADP from DnaK; ATP binding to DnaK triggers the release of the substrate protein, thus completing the reaction cycle. Several rounds of ATP-dependent interactions between DnaJ, DnaK and GrpE are required for fully efficient folding. The protein is Protein GrpE of Prochlorococcus marinus (strain MIT 9313).